Consider the following 268-residue polypeptide: Calpain small subunit 1 (268 aa).

Met-1 is subject to N-acetylmethionine. Ser-6 carries the post-translational modification Phosphoserine. Residues 91–125 (EANESEEVRQFRRLFAQLAGDDMEVSATELMNILN) enclose the EF-hand 1; atypical domain. Ca(2+)-binding residues include Ala-109, Asp-112, Glu-114, Glu-119, Asp-137, Asp-152, Asp-154, Thr-156, Lys-158, and Glu-163. EF-hand domains are found at residues 139–172 (FGID…NNIK), 169–204 (NNIK…AGFH), 205–233 (LNEH…ISCL), and 234–268 (VRLD…TMYS). Position 179 is an N6-acetyllysine (Lys-179). Asp-182, Asp-184, Ser-186, Thr-188, Glu-193, and Asp-225 together coordinate Ca(2+).

Homodimer or heterodimer of a large (catalytic) and a small (regulatory) subunit. In presence of calcium, the heterodimer dissociates.

It is found in the cytoplasm. It localises to the cell membrane. Its function is as follows. Regulatory subunit of the calcium-regulated non-lysosomal thiol-protease which catalyzes limited proteolysis of substrates involved in cytoskeletal remodeling and signal transduction. Essential for embryonic development. The protein is Calpain small subunit 1 (CAPNS1) of Homo sapiens (Human).